Consider the following 461-residue polypeptide: Cysteine--tRNA ligase (461 aa).

Cysteine 28 contacts Zn(2+). The 'HIGH' region signature appears at 30–40; sequence VTIYDLCHIGH. Zn(2+) contacts are provided by cysteine 209, histidine 234, and glutamate 238. The 'KMSKS' region signature appears at 266 to 270; the sequence is KMSKS. Residue lysine 269 participates in ATP binding.

It belongs to the class-I aminoacyl-tRNA synthetase family. Monomer. Zn(2+) is required as a cofactor.

Its subcellular location is the cytoplasm. It catalyses the reaction tRNA(Cys) + L-cysteine + ATP = L-cysteinyl-tRNA(Cys) + AMP + diphosphate. The protein is Cysteine--tRNA ligase of Vibrio atlanticus (strain LGP32) (Vibrio splendidus (strain Mel32)).